A 28-amino-acid chain; its full sequence is Truncated protein OPG079 (28 aa).

The protein belongs to the orthopoxvirus OPG079 family. In terms of assembly, homoomultimer (Potential). Interacts with the small subunit of ribonucleotide reductase. Interacts with host FAM111A; this interaction protomtes OPG079 degradation through autophagy.

Its subcellular location is the host cytoplasm. Its function is as follows. Plays an essential role in viral DNA replication. Binds to ssDNA with high affinity and localizes to cytoplasmic factories where nascent viral genomes accumulate. May disrupt loops, hairpins and other secondary structures present on ssDNA to reduce and eliminate pausing of viral DNA polymerase at specific sites during elongation. This chain is Truncated protein OPG079 (OPG079), found in Vaccinia virus (strain L-IVP) (VACV).